Here is a 447-residue protein sequence, read N- to C-terminus: MATQILLCFFLFFSVTLSSSGHPKNFSVELIHRDSPLSPIYNPQITVTDRLNAAFLRSVSRSRRFNHQLSQTDLQSGLIGADGEFFMSITIGTPPIKVFAIADTGSDLTWVQCKPCQQCYKENGPIFDKKKSSTYKSEPCDSRNCQALSSTERGCDESNNICKYRYSYGDQSFSKGDVATETVSIDSASGSPVSFPGTVFGCGYNNGGTFDETGSGIIGLGGGHLSLISQLGSSISKKFSYCLSHKSATTNGTSVINLGTNSIPSSLSKDSGVVSTPLVDKEPLTYYYLTLEAISVGKKKIPYTGSSYNPNDDGILSETSGNIIIDSGTTLTLLEAGFFDKFSSAVEESVTGAKRVSDPQGLLSHCFKSGSAEIGLPEITVHFTGADVRLSPINAFVKLSEDMVCLSMVPTTEVAIYGNFAQMDFLVGYDLETRTVSFQHMDCSANL.

A signal peptide spans 1–20 (MATQILLCFFLFFSVTLSSS). Asn-25 carries an N-linked (GlcNAc...) asparagine glycan. Residues 85 to 439 (FFMSITIGTP…DLETRTVSFQ (355 aa)) enclose the Peptidase A1 domain. Asp-103 is an active-site residue. Asn-251 is a glycosylation site (N-linked (GlcNAc...) asparagine). The active site involves Asp-326.

This sequence belongs to the peptidase A1 family.

The protein resides in the secreted. This Arabidopsis thaliana (Mouse-ear cress) protein is Probable aspartic protease At2g35615.